Here is a 332-residue protein sequence, read N- to C-terminus: L-lactate dehydrogenase A chain (332 aa).

NAD(+) contacts are provided by residues 29–57 (GMVG…MEDK) and arginine 99. Substrate contacts are provided by arginine 106, asparagine 138, and arginine 169. Asparagine 138 contributes to the NAD(+) binding site. Residue histidine 193 is the Proton acceptor of the active site. Threonine 248 contributes to the substrate binding site.

The protein belongs to the LDH/MDH superfamily. LDH family. In terms of assembly, homotetramer.

It localises to the cytoplasm. The catalysed reaction is (S)-lactate + NAD(+) = pyruvate + NADH + H(+). The protein operates within fermentation; pyruvate fermentation to lactate; (S)-lactate from pyruvate: step 1/1. In terms of biological role, interconverts simultaneously and stereospecifically pyruvate and lactate with concomitant interconversion of NADH and NAD(+). This is L-lactate dehydrogenase A chain (ldha) from Sphyraena lucasana (Lucas barracuda).